Reading from the N-terminus, the 642-residue chain is Chaperone protein HtpG (642 aa).

The segment at M1–R350 is a; substrate-binding. The interval E351–R567 is b. Residues L568 to K642 are c.

The protein belongs to the heat shock protein 90 family. Homodimer.

Its subcellular location is the cytoplasm. In terms of biological role, molecular chaperone. Has ATPase activity. In Marinomonas sp. (strain MWYL1), this protein is Chaperone protein HtpG.